The sequence spans 172 residues: MAKMQSKMQSEKPDDGMREKMIAVNRVTKVVKGGRIMGFAALAVVGDGDGRIGMGKGKSKEVPVAVQKAMEEARRKMIKVTLKNGTLQHTVTGKHGASSVLMLPAKEGTGVIAGGPMRAIFEVMGVTNVVAKSTGSTNPYNMVRATLEGLAKMNTPSEIAAKRGKSVEEILG.

In terms of domain architecture, S5 DRBM spans 17 to 80 (MREKMIAVNR…EEARRKMIKV (64 aa)).

Belongs to the universal ribosomal protein uS5 family. In terms of assembly, part of the 30S ribosomal subunit. Contacts proteins S4 and S8.

In terms of biological role, with S4 and S12 plays an important role in translational accuracy. Its function is as follows. Located at the back of the 30S subunit body where it stabilizes the conformation of the head with respect to the body. The chain is Small ribosomal subunit protein uS5 from Herminiimonas arsenicoxydans.